The primary structure comprises 394 residues: Putative F-box protein At5g66830 (394 aa).

The region spanning 17–63 (DWCWSKLPSDLMQFVFDRLGFADFQRAKSVCSSWLSVSRNSQPNNQI) is the F-box domain.

The polypeptide is Putative F-box protein At5g66830 (Arabidopsis thaliana (Mouse-ear cress)).